A 119-amino-acid chain; its full sequence is NADH-quinone oxidoreductase subunit A (119 aa).

3 consecutive transmembrane segments (helical) span residues 9 to 29 (IFLF…LGYI), 63 to 83 (LVAI…PWAV), and 88 to 108 (IGAL…VGFI).

Belongs to the complex I subunit 3 family. As to quaternary structure, NDH-1 is composed of 14 different subunits. Subunits NuoA, H, J, K, L, M, N constitute the membrane sector of the complex.

The protein localises to the cell inner membrane. It carries out the reaction a quinone + NADH + 5 H(+)(in) = a quinol + NAD(+) + 4 H(+)(out). Functionally, NDH-1 shuttles electrons from NADH, via FMN and iron-sulfur (Fe-S) centers, to quinones in the respiratory chain. The immediate electron acceptor for the enzyme in this species is believed to be ubiquinone. Couples the redox reaction to proton translocation (for every two electrons transferred, four hydrogen ions are translocated across the cytoplasmic membrane), and thus conserves the redox energy in a proton gradient. The protein is NADH-quinone oxidoreductase subunit A of Albidiferax ferrireducens (strain ATCC BAA-621 / DSM 15236 / T118) (Rhodoferax ferrireducens).